A 64-amino-acid polypeptide reads, in one-letter code: Putative neurotoxin 6 (64 aa).

An N-terminal signal peptide occupies residues 1–24 (MKNKFAALVITLFVLVLAIDNVTT).

The protein belongs to the scolopendra neurotoxin 6 family. Post-translationally, contains 3 disulfide bonds. In terms of tissue distribution, expressed by the venom gland.

The protein resides in the secreted. The protein is Putative neurotoxin 6 of Scolopendra mutilans (Chinese red-headed centipede).